Reading from the N-terminus, the 602-residue chain is Elongation factor 4 (602 aa).

One can recognise a tr-type G domain in the interval 7–189; that stretch reads KYIRNFSIVA…AIVNKVPAPD (183 aa). Residues 19 to 24 and 136 to 139 each bind GTP; these read DHGKST and NKID.

The protein belongs to the TRAFAC class translation factor GTPase superfamily. Classic translation factor GTPase family. LepA subfamily.

It is found in the cell membrane. The enzyme catalyses GTP + H2O = GDP + phosphate + H(+). Functionally, required for accurate and efficient protein synthesis under certain stress conditions. May act as a fidelity factor of the translation reaction, by catalyzing a one-codon backward translocation of tRNAs on improperly translocated ribosomes. Back-translocation proceeds from a post-translocation (POST) complex to a pre-translocation (PRE) complex, thus giving elongation factor G a second chance to translocate the tRNAs correctly. Binds to ribosomes in a GTP-dependent manner. The chain is Elongation factor 4 from Clostridium botulinum (strain Kyoto / Type A2).